The chain runs to 472 residues: MAPIIHKNLTAPELVEWALKLEKDSQLTARGALSVRSYAKTGRSPRDKRIVNTTDVTDNVDWGSVNMKLTEESFEKLKTIAKDYFATCKHLFVMDCFAGHDERYRLKVRVYTTRPYHALFMRNMLIVPTLEELQSFGEPDYVIYNAGEAKADPTVPGVTSTTSVALNFKTREQVILGTEYAGEMKKGILTVMFELMPRMGHLCMHASANVGKSGDVTVFFGLSGTGKTTLSADPRRNLIGDDEHVWTDRGVFNIEGGCYAKAIGLNPETEKDIYEAVRFGAVAENCTLDRRTHEIDFNDESICKNTRVAYPLMHIDGALSKAVAGHPKNIIFLTNDAFGVMPPVARLTSAQAMFWFVMGYTANVPGVEAGSARVARPIFSSCFGGPFLVRHATHYGQQLAEKMEKHNSRVWLLNTGYAGGRADRGAKRMPLRVTRAIIDAIHDGTLDQADYEVYPGWAFTFLRGLRTCPQAC.

221–228 (GLSGTGKT) serves as a coordination point for ATP.

This sequence belongs to the phosphoenolpyruvate carboxykinase (ATP) family. In terms of assembly, homodimer.

The protein resides in the glycosome. It catalyses the reaction oxaloacetate + ATP = phosphoenolpyruvate + ADP + CO2. The protein operates within carbohydrate biosynthesis; gluconeogenesis. In terms of biological role, P60 has the capability to bind to microtubules and membrane vesicles in vitro. The protein is Phosphoenolpyruvate carboxykinase (ATP), glycosomal of Trypanosoma brucei brucei.